The chain runs to 248 residues: Neurovirulence factor ICP34.5 (248 aa).

Residues 1–14 (MARRRRHRGPRRPR) show a composition bias toward basic residues. The segment at 1–16 (MARRRRHRGPRRPRPP) is required for nucleolar localization. Disordered regions lie at residues 1 to 129 (MARR…FRLP) and 149 to 174 (RRAGGEGAPEPPATPATPATPATPAT). Residues 24-35 (TAQSQVTSTPNS) show a composition bias toward polar residues. A compositionally biased stretch (pro residues) spans 45 to 58 (AAPPPPPAGGPPPS). Over residues 73 to 83 (ASDDDDDDDWP) the composition is skewed to acidic residues. Pro residues-rich tracts occupy residues 84–93 (DSPPPEPAPE) and 119–128 (SHPPSRPFRL). Residues 128–137 (LPPRLALRLR) carry the Nuclear export signal motif. A run of 5 repeats spans residues 161-163 (ATP), 164-166 (ATP), 167-169 (ATP), 170-172 (ATP), and 173-175 (ATP). A 5 X 3 AA tandem repeats of A-T-P region spans residues 161–175 (ATPATPATPATPATP). The span at 164 to 174 (ATPATPATPAT) shows a compositional bias: low complexity. A binding to PP1CA region spans residues 175–188 (PARVRFSPHVRVRH). Residues 175–188 (PARVRFSPHVRVRH) form an interaction with host PPP1CA region. The tract at residues 190-248 (VVWASAARLARRGSWARERADRARFRRRVAEAEAVIGPCLGPEARARALARGAGPANSV) is important for interferon resistance. The Bipartite nuclear localization signal signature appears at 200–218 (RRGSWARERADRARFRRRV). Positions 218 to 233 (VAEAEAVIGPCLGPEA) are interaction with host EIF2S1/EIF-2ALPHA.

This sequence belongs to the PPP1R15 family. As to quaternary structure, interacts with host PPP1CA; this interaction forms a high-molecular-weight complex that dephosphorylates EIF2S1/eIF-2alpha. Interacts with host EIF2S1/eIF-2alpha; this interaction is crucial for the specific dephosphorylation of EIF2S1/eIF-2alpha by PPP1CA. Binds to proliferating cell nuclear antigen (PCNA), which may release host cells from growth arrest and facilitate viral replication. Interacts (via N-terminus) with host C1QBP; this interaction allows C1QBP to be recruited to the inner nuclear membrane by ICP34.5. Interacts with host PRKCA. Interacts with protein UL31. Interacts with host STING/TMEM173; this interaction inhibits the intracellular DNA sensing pathway. Interacts with host BECN1; this interaction modulates host autophagy.

It is found in the host cytoplasm. It localises to the host nucleus. The protein resides in the host nucleolus. Its subcellular location is the virion. Its function is as follows. Inhibits the establishment of the immune response and of the integrated stress response (ISR) in the infected cell. Plays essential roles in viral nuclear egress to mediate capsid transit across the nuclear membrane. Facilitates nuclear egress cooperatively with host C1QBP and protein kinase C/PKC to induce lamin A/C phosphorylation and subsequent reorganization. In turn, lamina disassembles and nuclear egress occurs. Recruits the serine/threonine protein phosphatase PPP1CA/PP1-alpha to dephosphorylate the translation initiation factor EIF2S1/eIF-2alpha, thereby couteracting the host shutoff of protein synthesis involving double-stranded RNA-dependent protein kinase EIF2AK2/PKR. In turn, controls host IRF3 activation and subsequently inhibits host interferon response. Controls the DNA sensing pathway by interacting with and inhibiting host STING/TMEM173. Also down-modulates the host MHC class II proteins cell surface expression. Acts as a neurovirulence factor that has a profound effect on the growth of the virus in central nervous system tissue, by interacting with host BECN1 and thereby antagonizing the host autophagy response. The chain is Neurovirulence factor ICP34.5 (ICP34.5) from Homo sapiens (Human).